The chain runs to 72 residues: Protein kish (72 aa).

The first 26 residues, 1 to 26 (MVAIFNFQSLLVVILLFICTCTYIRG), serve as a signal peptide directing secretion. The Extracellular segment spans residues 27–47 (SYPSLLEVRDKHSFSGLPRKA). Residues 48–68 (AIIGERLSPWVSACCLIMGLW) form a helical membrane-spanning segment. Topologically, residues 69–72 (TLYN) are cytoplasmic.

This sequence belongs to the KISH family.

It is found in the golgi apparatus membrane. Functionally, involved in the early part of the secretory pathway. The protein is Protein kish (tmem167) of Dictyostelium discoideum (Social amoeba).